The chain runs to 152 residues: Biotin carboxyl carrier protein of acetyl-CoA carboxylase (152 aa).

Residues 72–148 (IIDILSPISG…TKNQVLMKII (77 aa)) enclose the Biotinyl-binding domain. K114 is subject to N6-biotinyllysine.

The protein localises to the plastid. It is found in the chloroplast. Its pathway is lipid metabolism; fatty acid biosynthesis. Its function is as follows. This protein is a component of the acetyl coenzyme A carboxylase complex; first, biotin carboxylase catalyzes the carboxylation of the carrier protein and then the transcarboxylase transfers the carboxyl group to form malonyl-CoA. The chain is Biotin carboxyl carrier protein of acetyl-CoA carboxylase (accB) from Cyanidium caldarium (Red alga).